Consider the following 467-residue polypeptide: Bifunctional enzyme LpxC/FabZ (467 aa).

The UDP-3-O-acyl-N-acetylglucosamine deacetylase stretch occupies residues 1–306; that stretch reads MLIHQRTLQN…FVKQLKKYAD (306 aa). 3 residues coordinate Zn(2+): H79, H264, and D268. The active-site Proton donor is the H291. The segment at 307–467 is 3-hydroxyacyl-[acyl-carrier-protein] dehydratase; sequence RNKLARQYQH…LMATVMEKKN (161 aa). The active site involves H370.

It in the N-terminal section; belongs to the LpxC family. In the C-terminal section; belongs to the thioester dehydratase family. It depends on Zn(2+) as a cofactor.

The protein resides in the cytoplasm. The catalysed reaction is a UDP-3-O-[(3R)-3-hydroxyacyl]-N-acetyl-alpha-D-glucosamine + H2O = a UDP-3-O-[(3R)-3-hydroxyacyl]-alpha-D-glucosamine + acetate. It carries out the reaction a (3R)-hydroxyacyl-[ACP] = a (2E)-enoyl-[ACP] + H2O. It participates in glycolipid biosynthesis; lipid IV(A) biosynthesis; lipid IV(A) from (3R)-3-hydroxytetradecanoyl-[acyl-carrier-protein] and UDP-N-acetyl-alpha-D-glucosamine: step 2/6. Its function is as follows. Catalyzes the hydrolysis of UDP-3-O-myristoyl-N-acetylglucosamine to form UDP-3-O-myristoylglucosamine and acetate, the committed step in lipid A biosynthesis. Involved in unsaturated fatty acids biosynthesis. Catalyzes the dehydration of short chain beta-hydroxyacyl-ACPs and long chain saturated and unsaturated beta-hydroxyacyl-ACPs. This chain is Bifunctional enzyme LpxC/FabZ (lpxC/fabZ), found in Chlorobaculum tepidum (strain ATCC 49652 / DSM 12025 / NBRC 103806 / TLS) (Chlorobium tepidum).